The sequence spans 103 residues: Large ribosomal subunit protein bL21 (103 aa).

The protein belongs to the bacterial ribosomal protein bL21 family. In terms of assembly, part of the 50S ribosomal subunit. Contacts protein L20.

Its function is as follows. This protein binds to 23S rRNA in the presence of protein L20. The polypeptide is Large ribosomal subunit protein bL21 (Bordetella avium (strain 197N)).